The primary structure comprises 118 residues: Developmental pluripotency-associated protein 5A (118 aa).

The region spanning 24 to 86 is the KH; atypical domain; that stretch reads PEVFQVQSLV…NNKIRAKWML (63 aa).

This sequence belongs to the KHDC1 family.

Its subcellular location is the cytoplasm. In terms of biological role, involved in the maintenance of embryonic stem (ES) cell pluripotency. Dispensable for self-renewal of pluripotent ES cells and establishment of germ cells. Associates with specific target mRNAs. In Mus musculus (Mouse), this protein is Developmental pluripotency-associated protein 5A (Dppa5a).